The primary structure comprises 224 residues: Ras-related protein Rab-11C (224 aa).

17–24 (GDSAVGKS) serves as a coordination point for GTP. The Effector region signature appears at 39 to 47 (TKATIGVDF). Residues 65-69 (DTAGQ) and 123-126 (NKSD) each bind GTP. The tract at residues 194–224 (QGKKLTPLSDPAPQLTANTTSTHQEKKSGCC) is disordered. Residues Cys223 and Cys224 are each lipidated (S-geranylgeranyl cysteine).

The protein belongs to the small GTPase superfamily. Rab family.

It is found in the membrane. This is Ras-related protein Rab-11C (rab11C) from Dictyostelium discoideum (Social amoeba).